The primary structure comprises 452 residues: Probable receptor-like protein kinase At5g20050 (452 aa).

The signal sequence occupies residues 1–23; the sequence is MEDKKANIIATILILALVVVIIA. The Extracellular segment spans residues 24 to 33; that stretch reads ARVSLKLSKT. A helical transmembrane segment spans residues 34–54; sequence FYLIAGVDISLILAVICFLII. Over 55-452 the chain is Cytoplasmic; the sequence is RSRYNKERKL…SSIISPISPR (398 aa). A Protein kinase domain is found at 103-392; the sequence is DGFRSLIGKG…MVIEMLEGRV (290 aa). ATP-binding positions include 109–117 and K131; that span reads IGKGGSGSV. Position 178 is a phosphotyrosine (Y178). The active-site Proton acceptor is the D236. Phosphothreonine is present on residues T270 and T275.

The protein belongs to the protein kinase superfamily. Ser/Thr protein kinase family.

The protein localises to the membrane. The catalysed reaction is L-seryl-[protein] + ATP = O-phospho-L-seryl-[protein] + ADP + H(+). The enzyme catalyses L-threonyl-[protein] + ATP = O-phospho-L-threonyl-[protein] + ADP + H(+). This chain is Probable receptor-like protein kinase At5g20050, found in Arabidopsis thaliana (Mouse-ear cress).